The following is a 553-amino-acid chain: MSDIALTVSILALVAVVGLFIGNVKFRGVGLGIGGVLFGGIIVGHFVSQAGMTLSSDMLHVIQEFGLILFVYTIGIQVGPGFFASLRVSGLRLNLFAVLIVIIGGLVTAILHKLFDIPLPVVLGIFSGAVTNTPALGAGQQILRDLGTPMAMVDQMGMSYAMAYPFGICGILFTMWMLRVIFRVNVETEAQQHESTRTNGGALIRTINIRVENPNLHNLAIKDVPILNGDKVICSRLKREETLKVPSPETVIQLGDLLHLVGQPADLHNAQLVIGQEVDTSLSTKGTDLRVARVVVTNENVLGKRIRDLHFKERYDVVISRLNRAGVELVASSDISLQFGDILNLVGRPSAIDAVANVLGNAQQKLQQVQMLPVFIGIGLGVLLGSIPVFVPGFPAALKLGLAGGPLIMALILGRIGSIGKLYWFMPPSANLALRELGIVLFLSVVGLKSGGDFIHTLVDGEGLSWIGYGALITAVPLITVGILARMLAKMNYLTMCGMLAGSMTDPPALAFANNLHPTSGAAALSYATVYPLVMFLRIITPQLLAVLFWSIG.

Transmembrane regions (helical) follow at residues 4–24 (IALTVSILALVAVVGLFIGNV), 28–48 (GVGLGIGGVLFGGIIVGHFVS), 65–85 (FGLILFVYTIGIQVGPGFFAS), 95–115 (LFAVLIVIIGGLVTAILHKLF), and 158–178 (MSYAMAYPFGICGILFTMWML). RCK C-terminal domains follow at residues 191–276 (QQHE…VIGQ) and 279–361 (DTSL…VLGN). 6 consecutive transmembrane segments (helical) span residues 371-391 (MLPVFIGIGLGVLLGSIPVFV), 393-413 (GFPAALKLGLAGGPLIMALIL), 439-459 (IVLFLSVVGLKSGGDFIHTLV), 464-484 (LSWIGYGALITAVPLITVGIL), 493-513 (YLTMCGMLAGSMTDPPALAFA), and 533-553 (LVMFLRIITPQLLAVLFWSIG).

The protein belongs to the AAE transporter (TC 2.A.81) family. YidE subfamily.

It localises to the cell membrane. The protein is Putative transport protein YidE of Escherichia coli O6:H1 (strain CFT073 / ATCC 700928 / UPEC).